The chain runs to 216 residues: 2',3'-cyclic-nucleotide 3'-phosphodiesterase (216 aa).

The active-site Proton donor/acceptor is the His39. Thr41 is a substrate binding site. His153 (proton donor/acceptor) is an active-site residue. Positions 155 and 158 each coordinate substrate.

It belongs to the 2H phosphoesterase superfamily. CPD1 family.

The protein localises to the golgi apparatus. The enzyme catalyses a nucleoside 2',3'-cyclic phosphate + H2O = a nucleoside 2'-phosphate + H(+). In terms of biological role, involved in the metabolism of ADP-ribose 1',2'-cyclic phosphate which is produced as a consequence of tRNA splicing. The protein is 2',3'-cyclic-nucleotide 3'-phosphodiesterase (CPD1) of Yarrowia lipolytica (strain CLIB 122 / E 150) (Yeast).